A 150-amino-acid chain; its full sequence is Large ribosomal subunit protein bL9 (150 aa).

The protein belongs to the bacterial ribosomal protein bL9 family.

In terms of biological role, binds to the 23S rRNA. In Shewanella baltica (strain OS223), this protein is Large ribosomal subunit protein bL9.